The chain runs to 118 residues: p-cumate 2,3-dioxygenase system, ferredoxin component (118 aa).

The 98-residue stretch at 14–111 (VGLCATDDVA…VTVEGGQIFV (98 aa)) folds into the Rieske domain. The [2Fe-2S] cluster site is built by cysteine 54, histidine 56, cysteine 74, and histidine 77.

This sequence belongs to the bacterial ring-hydroxylating dioxygenase ferredoxin component family. The p-cumate 2,3-dioxygenase multicomponent enzyme system is composed of an electron transfer component and a dioxygenase component (iron sulfur protein (ISP)). The electron transfer component is composed of a ferredoxin reductase (CmtAa) and a ferredoxin (CmtAd), and the dioxygenase component is formed of a large alpha subunit (CmtAb) and a small beta subunit (CmtAc). [2Fe-2S] cluster serves as cofactor.

It functions in the pathway aromatic compound metabolism; p-cumate degradation; acetaldehyde and pyruvate from p-cumate. Functionally, component of the p-cumate 2,3-dioxygenase multicomponent enzyme system which catalyzes the incorporation of both atoms of molecular oxygen into p-cumate to form cis-2,3-dihydroxy-2,3-dihydro-p-cumate. Functions as an intermediate electron transfer protein via a specific interaction with iron sulfur protein components (ISP)(CmtAb and CmtAc). The polypeptide is p-cumate 2,3-dioxygenase system, ferredoxin component (Pseudomonas putida (Arthrobacter siderocapsulatus)).